A 491-amino-acid polypeptide reads, in one-letter code: 3-octaprenyl-4-hydroxybenzoate carboxy-lyase (491 aa).

Residue asparagine 176 participates in Mn(2+) binding. Prenylated FMN contacts are provided by residues 179–181 (IYR), 193–195 (RWL), and 198–199 (RG). Glutamate 242 is a binding site for Mn(2+). Aspartate 291 (proton donor) is an active-site residue.

This sequence belongs to the UbiD family. Homohexamer. It depends on prenylated FMN as a cofactor. The cofactor is Mn(2+).

Its subcellular location is the cell membrane. It carries out the reaction a 4-hydroxy-3-(all-trans-polyprenyl)benzoate + H(+) = a 2-(all-trans-polyprenyl)phenol + CO2. It participates in cofactor biosynthesis; ubiquinone biosynthesis. Its function is as follows. Catalyzes the decarboxylation of 3-octaprenyl-4-hydroxy benzoate to 2-octaprenylphenol, an intermediate step in ubiquinone biosynthesis. This Chromobacterium violaceum (strain ATCC 12472 / DSM 30191 / JCM 1249 / CCUG 213 / NBRC 12614 / NCIMB 9131 / NCTC 9757 / MK) protein is 3-octaprenyl-4-hydroxybenzoate carboxy-lyase.